We begin with the raw amino-acid sequence, 413 residues long: Histidine--tRNA ligase (413 aa).

The protein belongs to the class-II aminoacyl-tRNA synthetase family. As to quaternary structure, homodimer.

The protein localises to the cytoplasm. It carries out the reaction tRNA(His) + L-histidine + ATP = L-histidyl-tRNA(His) + AMP + diphosphate + H(+). This chain is Histidine--tRNA ligase (hisS), found in Rickettsia prowazekii (strain Madrid E).